The primary structure comprises 443 residues: Transcriptional adapter 2-alpha (443 aa).

Phosphoserine; in variant Ser-6 is present on proline 6. The ZZ-type zinc finger occupies 12–69 (SDKPPCRGCSSYLMEPYIKCAECGPPPFFLCLQCFTRGFEYKKHQSDHTYEIMTSDFP). Cysteine 17, cysteine 20, cysteine 31, cysteine 34, cysteine 42, cysteine 45, histidine 55, and histidine 59 together coordinate Zn(2+). The SANT domain occupies 70 to 122 (VLDPSWTAQEEMALLEAVMDCGFGNWQDVANQMCTKTKEECEKHYMKHFINNP). Residues lysine 132 and lysine 138 each participate in a glycyl lysine isopeptide (Lys-Gly) (interchain with G-Cter in SUMO2) cross-link. The interval 348–372 (SPSIPMASNSGRRSAPPLNLTGLPG) is disordered. One can recognise an SWIRM domain in the interval 356 to 443 (NSGRRSAPPL…LIREGYITKG (88 aa)). The DNA-binding element occupies 426–435 (KTRKIYDFLI).

In terms of assembly, interacts with GCN5 and NR3C1. Associated with the P/CAF protein in the PCAF complex. Component of the PCAF complex, at least composed of TADA2L/ADA2, TADA3L/ADA3, TAF5L/PAF65-beta, TAF6L/PAF65-alpha, TAF10/TAFII30, TAF12/TAFII20, TAF9/TAFII31 and TRRAP. Component of the ADA2A-containing complex (ATAC), composed of KAT14, KAT2A, TADA2L, TADA3L, ZZ3, MBIP, WDR5, YEATS2, CCDC101 and DR1. Interacts with CCDC134. As to expression, expressed in all tissues, but most abundantly in testis.

It is found in the nucleus. It localises to the chromosome. Its function is as follows. Component of the ATAC complex, a complex with histone acetyltransferase activity on histones H3 and H4. Required for the function of some acidic activation domains, which activate transcription from a distant site. Binds double-stranded DNA. Binds dinucleosomes, probably at the linker region between neighboring nucleosomes. Plays a role in chromatin remodeling. May promote TP53/p53 'Lys-321' acetylation, leading to reduced TP53 stability and transcriptional activity. May also promote XRCC6 acetylation thus facilitating cell apoptosis in response to DNA damage. The sequence is that of Transcriptional adapter 2-alpha (TADA2A) from Homo sapiens (Human).